Consider the following 438-residue polypeptide: GDP-mannose 6-dehydrogenase (438 aa).

NAD(+) contacts are provided by Y10, V11, D30, K35, T86, and T124. GDP-alpha-D-mannuronate contacts are provided by E161, K210, N214, H217, N225, Y256, Y257, R259, F262, and G265. Residue C268 is part of the active site. K271 contacts NAD(+). K324 lines the GDP-alpha-D-mannuronate pocket. R331 is an NAD(+) binding site.

Belongs to the UDP-glucose/GDP-mannose dehydrogenase family.

It catalyses the reaction GDP-alpha-D-mannose + 2 NAD(+) + H2O = GDP-alpha-D-mannuronate + 2 NADH + 3 H(+). Its pathway is glycan biosynthesis; alginate biosynthesis. Its function is as follows. Catalyzes the oxidation of guanosine diphospho-D-mannose (GDP-D-mannose) to GDP-D-mannuronic acid, a precursor for alginate polymerization. The alginate layer causes a mucoid phenotype and provides a protective barrier against host immune defenses and antibiotics. The polypeptide is GDP-mannose 6-dehydrogenase (algD) (Pseudomonas syringae pv. syringae).